A 301-amino-acid polypeptide reads, in one-letter code: Helicase VP6-A (301 aa).

Disordered stretches follow at residues 1–99 and 163–208; these read MIDW…TTGT and RRKE…TSVG. 3 stretches are compositionally biased toward basic and acidic residues: residues 8 to 30, 37 to 55, and 67 to 81; these read ESGK…KDGE, GQKK…DRRV, and GFRE…RGDG. Residue lysine 82 participates in ATP binding. Basic and acidic residues-rich tracts occupy residues 163–177 and 186–202; these read RRKE…VAEK and VHGD…KTPE.

This sequence belongs to the orbivirus VP6 family. As to quaternary structure, homohexamer.

The protein localises to the virion. It carries out the reaction ATP + H2O = ADP + phosphate + H(+). Functionally, ATP dependent RNA helicase essential for RNA packaging and viral transcription. Possesses ss- and dsRNA-binding capacity. This Bluetongue virus 2 (isolate USA) (BTV 2) protein is Helicase VP6-A (Segment-9).